The chain runs to 237 residues: tRNA (guanine-N(1)-)-methyltransferase (237 aa).

S-adenosyl-L-methionine-binding positions include Gly-113 and 133–138 (MGDYIL).

The protein belongs to the RNA methyltransferase TrmD family. Homodimer.

Its subcellular location is the cytoplasm. It carries out the reaction guanosine(37) in tRNA + S-adenosyl-L-methionine = N(1)-methylguanosine(37) in tRNA + S-adenosyl-L-homocysteine + H(+). Its function is as follows. Specifically methylates guanosine-37 in various tRNAs. The polypeptide is tRNA (guanine-N(1)-)-methyltransferase (Wolinella succinogenes (strain ATCC 29543 / DSM 1740 / CCUG 13145 / JCM 31913 / LMG 7466 / NCTC 11488 / FDC 602W) (Vibrio succinogenes)).